Here is a 208-residue protein sequence, read N- to C-terminus: Large ribosomal subunit protein uL3 (208 aa).

Gln-149 is modified (N5-methylglutamine).

It belongs to the universal ribosomal protein uL3 family. In terms of assembly, part of the 50S ribosomal subunit. Forms a cluster with proteins L14 and L19. Post-translationally, methylated by PrmB.

One of the primary rRNA binding proteins, it binds directly near the 3'-end of the 23S rRNA, where it nucleates assembly of the 50S subunit. The protein is Large ribosomal subunit protein uL3 of Haemophilus ducreyi (strain 35000HP / ATCC 700724).